A 259-amino-acid chain; its full sequence is Hydroxyacylglutathione hydrolase (259 aa).

Positions 56, 58, 60, 61, 112, 133, and 171 each coordinate Zn(2+). Over residues 224–238 (RTRETSVKEKADERS) the composition is skewed to basic and acidic residues. Positions 224–245 (RTRETSVKEKADERSSGQNTSQ) are disordered.

Belongs to the metallo-beta-lactamase superfamily. Glyoxalase II family. In terms of assembly, monomer. Zn(2+) serves as cofactor.

The enzyme catalyses an S-(2-hydroxyacyl)glutathione + H2O = a 2-hydroxy carboxylate + glutathione + H(+). It functions in the pathway secondary metabolite metabolism; methylglyoxal degradation; (R)-lactate from methylglyoxal: step 2/2. In terms of biological role, thiolesterase that catalyzes the hydrolysis of S-D-lactoyl-glutathione to form glutathione and D-lactic acid. The chain is Hydroxyacylglutathione hydrolase from Pseudomonas savastanoi pv. phaseolicola (strain 1448A / Race 6) (Pseudomonas syringae pv. phaseolicola (strain 1448A / Race 6)).